The sequence spans 356 residues: Alanine racemase (356 aa).

Lysine 34 functions as the Proton acceptor; specific for D-alanine in the catalytic mechanism. Residue lysine 34 is modified to N6-(pyridoxal phosphate)lysine. Arginine 129 contacts substrate. The Proton acceptor; specific for L-alanine role is filled by tyrosine 253. Substrate is bound at residue methionine 301.

It belongs to the alanine racemase family. Requires pyridoxal 5'-phosphate as cofactor.

It catalyses the reaction L-alanine = D-alanine. The protein operates within amino-acid biosynthesis; D-alanine biosynthesis; D-alanine from L-alanine: step 1/1. Functionally, catalyzes the interconversion of L-alanine and D-alanine. May also act on other amino acids. The sequence is that of Alanine racemase (alr) from Nitrosococcus oceani (strain ATCC 19707 / BCRC 17464 / JCM 30415 / NCIMB 11848 / C-107).